Reading from the N-terminus, the 310-residue chain is MVLIKEREMEIPVIDFAELDGEKRSKTMSLLDHACDKWGFFMVDNHGIDKELMEKVKKMINSHYEEHLKEKFYQSEMVKALSEGKTSDADWESSFFISHKPTSNICQIPNISEELSKTMDEYVCQLHKFAERLSKLMCENLGLDQEDIMNAFSGPKGPAFGTKVAKYPECPRPELMRGLREHTDAGGIILLLQDDQVPGLEFFKDGKWVPIPPSKNNTIFVNTGDQLEILSNGRYKSVVHRVMTVKHGSRLSIATFYNPAGDAIISPAPKLLYPSGYRFQDYLKLYSTTKFGDKGPRLETMKKMGNADSA.

Residues 113 to 133 adopt a coiled-coil conformation; sequence EELSKTMDEYVCQLHKFAERL. One can recognise a Fe2OG dioxygenase domain in the interval 158–259; that stretch reads PAFGTKVAKY…RLSIATFYNP (102 aa). Positions 182, 184, and 240 each coordinate Fe cation. Arg-250 serves as a coordination point for 2-oxoglutarate.

Belongs to the iron/ascorbate-dependent oxidoreductase family. Requires Fe(2+) as cofactor.

It catalyses the reaction 1-aminocyclopropane-1-carboxylate + L-ascorbate + O2 = ethene + L-dehydroascorbate + hydrogen cyanide + CO2 + 2 H2O. The protein operates within alkene biosynthesis; ethylene biosynthesis via S-adenosyl-L-methionine; ethylene from S-adenosyl-L-methionine: step 2/2. Enzyme involved in the ethylene biosynthesis. May promote stem elongation by maximizing the extensibility cells, possibly by activating ethylene biosynthesis, in response to very-long-chain fatty acids (VLCFAs C20:0 to C30:0). The sequence is that of 1-aminocyclopropane-1-carboxylate oxidase 1 (ACO1) from Arabidopsis thaliana (Mouse-ear cress).